The chain runs to 328 residues: MSSDEGETPKMGFGHAMLLKMGWKGKGLGVEEDGRTEIIVNKKKQDKVGVGASISDRVSTSNNWESTNEAYDHILAKLNGVDEITWKKKNNKFVKEEKITFKRTIKKNSKKNKDESDSDSDSDSESESDKKPTKKQKVQSDSDSSCSDSSSSSSSSSSESEKEDKSSSNTTSDESDKESSSDSSDSSESENEKKDKKKIVNNKKGKDSDSSSSSDDSCSSESDSSSSSSSSSSSSDSSSESDSDNKNKNKNKNKNKKSKESDSSSSSSSSESEEEEKKEVAKKSFSVSKTRYQRLLRAKSVKNYSEDDLREILGYRPNQDTRKLKTKE.

A G-patch domain is found at 10-55; sequence KMGFGHAMLLKMGWKGKGLGVEEDGRTEIIVNKKKQDKVGVGASIS. The tract at residues 97–291 is disordered; that stretch reads EKITFKRTIK…KKSFSVSKTR (195 aa). Positions 101–110 are enriched in basic residues; that stretch reads FKRTIKKNSK. The span at 116–126 shows a compositional bias: acidic residues; sequence SDSDSDSDSES. Low complexity-rich tracts occupy residues 141–158 and 210–240; these read DSDS…SSSS and SSSS…SSSE. Residues 248-257 show a composition bias toward basic residues; it reads KNKNKNKNKK.

This is an uncharacterized protein from Dictyostelium discoideum (Social amoeba).